The chain runs to 185 residues: Elongation factor P 1 (185 aa).

It belongs to the elongation factor P family.

It localises to the cytoplasm. It participates in protein biosynthesis; polypeptide chain elongation. In terms of biological role, involved in peptide bond synthesis. Stimulates efficient translation and peptide-bond synthesis on native or reconstituted 70S ribosomes in vitro. Probably functions indirectly by altering the affinity of the ribosome for aminoacyl-tRNA, thus increasing their reactivity as acceptors for peptidyl transferase. The polypeptide is Elongation factor P 1 (efp1) (Chlamydia muridarum (strain MoPn / Nigg)).